The primary structure comprises 504 residues: Ectoine/proline transporter ProP (504 aa).

11 consecutive transmembrane segments (helical) span residues 41 to 61 (FMEW…TAVF), 71 to 91 (LLAV…GGLV), 118 to 138 (LIGL…LLYL), 169 to 189 (FFGA…ASVV), 207 to 227 (DFGW…AVYL), 272 to 292 (LLIG…LTSY), 309 to 329 (AAVT…VGMW), 337 to 357 (PVYA…FLIM), 362 to 382 (IGAV…YVAL), 399 to 419 (GMGI…PLIT), and 430 to 450 (IVPA…LLFM). The interval 477–504 (NQDEDPNIDLSHMPFPDEENVGAEKQNA) is disordered.

The protein belongs to the major facilitator superfamily.

The protein resides in the cell membrane. With respect to regulation, uptake is activated by osmotic stress. Inhibited by CCCP. Involved in the uptake of osmoprotectants. Can transport ectoine and proline. Protons are probably the coupling ions. This is Ectoine/proline transporter ProP from Corynebacterium glutamicum (strain ATCC 13032 / DSM 20300 / JCM 1318 / BCRC 11384 / CCUG 27702 / LMG 3730 / NBRC 12168 / NCIMB 10025 / NRRL B-2784 / 534).